The sequence spans 704 residues: Polyribonucleotide nucleotidyltransferase (704 aa).

Positions 486 and 492 each coordinate Mg(2+). The KH domain maps to 553-612 (PKIVIVKINPDKIRDVIGPGGKQINKIIEETGVKIDTEQDGTIYISSANEEMNARAKQII). Residues 622–690 (GEYYLSTVKR…KQGRVNLSRK (69 aa)) enclose the S1 motif domain.

This sequence belongs to the polyribonucleotide nucleotidyltransferase family. Mg(2+) serves as cofactor.

Its subcellular location is the cytoplasm. The enzyme catalyses RNA(n+1) + phosphate = RNA(n) + a ribonucleoside 5'-diphosphate. In terms of biological role, involved in mRNA degradation. Catalyzes the phosphorolysis of single-stranded polyribonucleotides processively in the 3'- to 5'-direction. The protein is Polyribonucleotide nucleotidyltransferase of Lysinibacillus sphaericus (strain C3-41).